We begin with the raw amino-acid sequence, 1137 residues long: 2'-5'-oligoadenylate synthase 3 (1137 aa).

Residue Met-1 is modified to N-acetylmethionine. The segment at 6-341 is OAS domain 1; that stretch reads TPAGALDKLV…GALVQPWEGP (336 aa). Interaction with dsRNA stretches follow at residues 12-56 and 185-199; these read DKLV…VIRI and ELRKNFVNIRPVKLK. The tract at residues 342-461 is linker; the sequence is GLPCAGILDL…GSQMGPDLSQ (120 aa). Positions 434 to 453 are enriched in polar residues; that stretch reads QSTASSNTPPGHSSMSTAGS. The interval 434–462 is disordered; that stretch reads QSTASSNTPPGHSSMSTAGSQMGPDLSQI. 2 OAS domain regions span residues 462–792 and 800–1134; these read IPSK…PWDV and TPAQ…WPVK. ATP is bound at residue Ser-854. Positions 866, 868, and 938 each coordinate Mg(2+). Residues Arg-997, Lys-1000, and Gln-1019 each contribute to the ATP site.

It belongs to the 2-5A synthase family. Monomer. It depends on Mg(2+) as a cofactor.

The protein localises to the cytoplasm. It is found in the nucleus. It carries out the reaction 3 ATP = 5'-triphosphoadenylyl-(2'-&gt;5')-adenylyl-(2'-&gt;5')-adenosine + 2 diphosphate. Its activity is regulated as follows. Produced as a latent enzyme which is activated by dsRNA generated during the course of viral infection. Strongly activated by long dsRNAs at least 50 nucleotides in length. ssRNA does not activate the enzyme. Functionally, interferon-induced, dsRNA-activated antiviral enzyme which plays a critical role in cellular innate antiviral response. In addition, it may also play a role in other cellular processes such as apoptosis, cell growth, differentiation and gene regulation. Synthesizes preferentially dimers of 2'-5'-oligoadenylates (2-5A) from ATP which then bind to the inactive monomeric form of ribonuclease L (RNase L) leading to its dimerization and subsequent activation. Activation of RNase L leads to degradation of cellular as well as viral RNA, resulting in the inhibition of protein synthesis, thus terminating viral replication. Can mediate the antiviral effect via the classical RNase L-dependent pathway or an alternative antiviral pathway independent of RNase L. The protein is 2'-5'-oligoadenylate synthase 3 (Oas3) of Rattus norvegicus (Rat).